Here is a 438-residue protein sequence, read N- to C-terminus: Na(+)/H(+) antiporter NhaA (438 aa).

The next 11 helical transmembrane spans lie at 23–43, 62–82, 104–124, 133–153, 162–182, 185–205, 221–241, 302–322, 337–357, 372–392, and 410–430; these read FGGI…NSFL, FFIG…LFFL, SFPV…YFFL, GFGI…MLLG, VFLI…IALF, TNLK…LAVL, VLLW…AVIL, FLAP…NAGV, LGVI…ITFI, WWHI…SMFI, and IAIL…LFAL.

Belongs to the NhaA Na(+)/H(+) (TC 2.A.33) antiporter family.

The protein resides in the cell inner membrane. It catalyses the reaction Na(+)(in) + 2 H(+)(out) = Na(+)(out) + 2 H(+)(in). In terms of biological role, na(+)/H(+) antiporter that extrudes sodium in exchange for external protons. In Helicobacter pylori (strain ATCC 700392 / 26695) (Campylobacter pylori), this protein is Na(+)/H(+) antiporter NhaA.